Here is a 507-residue protein sequence, read N- to C-terminus: Keratin, type II cuticular Hb5 (507 aa).

The interval 1 to 123 is head; the sequence is MSCRSYRISP…PNAQCVKYEE (123 aa). Residues 123–434 enclose the IF rod domain; it reads EKEQIKCLNS…RLLEGEEQRL (312 aa). The coil 1A stretch occupies residues 124–158; the sequence is KEQIKCLNSKFAAFIDKVRFLEQQNKLLETKWQFY. Residues 159–168 form a linker 1 region; the sequence is QNRKCCESNL. The interval 169-269 is coil 1B; the sequence is EPLFGGYIEA…YEEEVCVLQA (101 aa). A Glycyl lysine isopeptide (Lys-Gly) (interchain with G-Cter in SUMO1) cross-link involves residue Lys229. The interval 270–286 is linker 12; it reads HISDTSVIVKMDNSRDL. Positions 287–430 are coil 2; the sequence is NMDCVVAEIK…ATYRRLLEGE (144 aa). The segment at 431-507 is tail; the sequence is EQRLCEGVGS…CGSSRSVRFA (77 aa).

It belongs to the intermediate filament family. In terms of assembly, heterotetramer of two type I and two type II keratins.

This Mus musculus (Mouse) protein is Keratin, type II cuticular Hb5 (Krt85).